We begin with the raw amino-acid sequence, 156 residues long: Arginine repressor (156 aa).

This sequence belongs to the ArgR family.

The protein localises to the cytoplasm. The protein operates within amino-acid biosynthesis; L-arginine biosynthesis [regulation]. In terms of biological role, regulates arginine biosynthesis genes. In Shewanella loihica (strain ATCC BAA-1088 / PV-4), this protein is Arginine repressor.